A 134-amino-acid chain; its full sequence is ATP synthase epsilon chain (134 aa).

It belongs to the ATPase epsilon chain family. In terms of assembly, F-type ATPases have 2 components, CF(1) - the catalytic core - and CF(0) - the membrane proton channel. CF(1) has five subunits: alpha(3), beta(3), gamma(1), delta(1), epsilon(1). CF(0) has three main subunits: a, b and c.

It is found in the cellular thylakoid membrane. In terms of biological role, produces ATP from ADP in the presence of a proton gradient across the membrane. In Prochlorococcus marinus (strain MIT 9215), this protein is ATP synthase epsilon chain.